The chain runs to 312 residues: tRNA uridine(34) hydroxylase (312 aa).

The Rhodanese domain maps to Ser123 to Ser217. Catalysis depends on Cys177, which acts as the Cysteine persulfide intermediate. Over residues Ala282 to Arg293 the composition is skewed to basic and acidic residues. Positions Ala282–Asn312 are disordered.

This sequence belongs to the TrhO family.

The catalysed reaction is uridine(34) in tRNA + AH2 + O2 = 5-hydroxyuridine(34) in tRNA + A + H2O. Its function is as follows. Catalyzes oxygen-dependent 5-hydroxyuridine (ho5U) modification at position 34 in tRNAs. The chain is tRNA uridine(34) hydroxylase from Pseudomonas aeruginosa (strain UCBPP-PA14).